The primary structure comprises 154 residues: NADPH-dependent 7-cyano-7-deazaguanine reductase (154 aa).

Cys52 serves as the catalytic Thioimide intermediate. The active-site Proton donor is the Asp59. Residues 74–76 (VES) and 93–94 (HE) each bind substrate.

It belongs to the GTP cyclohydrolase I family. QueF type 1 subfamily.

Its subcellular location is the cytoplasm. It catalyses the reaction 7-aminomethyl-7-carbaguanine + 2 NADP(+) = 7-cyano-7-deazaguanine + 2 NADPH + 3 H(+). It functions in the pathway tRNA modification; tRNA-queuosine biosynthesis. In terms of biological role, catalyzes the NADPH-dependent reduction of 7-cyano-7-deazaguanine (preQ0) to 7-aminomethyl-7-deazaguanine (preQ1). In Rhizobium rhizogenes (strain K84 / ATCC BAA-868) (Agrobacterium radiobacter), this protein is NADPH-dependent 7-cyano-7-deazaguanine reductase.